The primary structure comprises 196 residues: Holliday junction branch migration complex subunit RuvA (196 aa).

The segment at 1 to 63 (MYEYFKGIIS…EDAELLYGFA (63 aa)) is domain I. The segment at 64–142 (TEEEKQLFLS…AADGLAESKA (79 aa)) is domain II. Residues 143–146 (PVQT) form a flexible linker region. The segment at 147–196 (VDNQELEEAMEAMLALGYKATELKKIKKFFEGTTDTAENYIKSALKMLVK) is domain III.

This sequence belongs to the RuvA family. Homotetramer. Forms an RuvA(8)-RuvB(12)-Holliday junction (HJ) complex. HJ DNA is sandwiched between 2 RuvA tetramers; dsDNA enters through RuvA and exits via RuvB. An RuvB hexamer assembles on each DNA strand where it exits the tetramer. Each RuvB hexamer is contacted by two RuvA subunits (via domain III) on 2 adjacent RuvB subunits; this complex drives branch migration. In the full resolvosome a probable DNA-RuvA(4)-RuvB(12)-RuvC(2) complex forms which resolves the HJ.

It is found in the cytoplasm. Its function is as follows. The RuvA-RuvB-RuvC complex processes Holliday junction (HJ) DNA during genetic recombination and DNA repair, while the RuvA-RuvB complex plays an important role in the rescue of blocked DNA replication forks via replication fork reversal (RFR). RuvA specifically binds to HJ cruciform DNA, conferring on it an open structure. The RuvB hexamer acts as an ATP-dependent pump, pulling dsDNA into and through the RuvAB complex. HJ branch migration allows RuvC to scan DNA until it finds its consensus sequence, where it cleaves and resolves the cruciform DNA. The polypeptide is Holliday junction branch migration complex subunit RuvA (Streptococcus gordonii (strain Challis / ATCC 35105 / BCRC 15272 / CH1 / DL1 / V288)).